An 89-amino-acid chain; its full sequence is Small ribosomal subunit protein uS15 (89 aa).

Positions M1–D21 are enriched in basic and acidic residues. The segment at M1–S24 is disordered.

Belongs to the universal ribosomal protein uS15 family. In terms of assembly, part of the 30S ribosomal subunit. Forms a bridge to the 50S subunit in the 70S ribosome, contacting the 23S rRNA.

One of the primary rRNA binding proteins, it binds directly to 16S rRNA where it helps nucleate assembly of the platform of the 30S subunit by binding and bridging several RNA helices of the 16S rRNA. In terms of biological role, forms an intersubunit bridge (bridge B4) with the 23S rRNA of the 50S subunit in the ribosome. The chain is Small ribosomal subunit protein uS15 from Solidesulfovibrio magneticus (strain ATCC 700980 / DSM 13731 / RS-1) (Desulfovibrio magneticus).